The chain runs to 358 residues: Alanine racemase (358 aa).

Catalysis depends on K34, which acts as the Proton acceptor; specific for D-alanine. Position 34 is an N6-(pyridoxal phosphate)lysine (K34). R129 lines the substrate pocket. Y254 acts as the Proton acceptor; specific for L-alanine in catalysis. M302 contacts substrate.

It belongs to the alanine racemase family. Pyridoxal 5'-phosphate serves as cofactor.

The catalysed reaction is L-alanine = D-alanine. It functions in the pathway amino-acid biosynthesis; D-alanine biosynthesis; D-alanine from L-alanine: step 1/1. Catalyzes the interconversion of L-alanine and D-alanine. May also act on other amino acids. This Aliivibrio salmonicida (strain LFI1238) (Vibrio salmonicida (strain LFI1238)) protein is Alanine racemase (alr).